The sequence spans 964 residues: Glycine dehydrogenase (decarboxylating) (964 aa).

Lysine 710 is modified (N6-(pyridoxal phosphate)lysine).

It belongs to the GcvP family. As to quaternary structure, the glycine cleavage system is composed of four proteins: P, T, L and H. Pyridoxal 5'-phosphate is required as a cofactor.

The catalysed reaction is N(6)-[(R)-lipoyl]-L-lysyl-[glycine-cleavage complex H protein] + glycine + H(+) = N(6)-[(R)-S(8)-aminomethyldihydrolipoyl]-L-lysyl-[glycine-cleavage complex H protein] + CO2. In terms of biological role, the glycine cleavage system catalyzes the degradation of glycine. The P protein binds the alpha-amino group of glycine through its pyridoxal phosphate cofactor; CO(2) is released and the remaining methylamine moiety is then transferred to the lipoamide cofactor of the H protein. The sequence is that of Glycine dehydrogenase (decarboxylating) from Saccharophagus degradans (strain 2-40 / ATCC 43961 / DSM 17024).